Reading from the N-terminus, the 187-residue chain is Peptide methionine sulfoxide reductase A2-1 (187 aa).

The protein belongs to the MsrA Met sulfoxide reductase family.

The protein resides in the cytoplasm. The protein localises to the cytosol. It carries out the reaction L-methionyl-[protein] + [thioredoxin]-disulfide + H2O = L-methionyl-(S)-S-oxide-[protein] + [thioredoxin]-dithiol. The catalysed reaction is [thioredoxin]-disulfide + L-methionine + H2O = L-methionine (S)-S-oxide + [thioredoxin]-dithiol. In terms of biological role, catalyzes the reduction of methionine sulfoxide (MetSO) to methionine in proteins. Plays a protective role against oxidative stress by restoring activity to proteins that have been inactivated by methionine oxidation. MSRA family specifically reduces the MetSO S-enantiomer. The polypeptide is Peptide methionine sulfoxide reductase A2-1 (MSRA2-1) (Oryza sativa subsp. japonica (Rice)).